The following is a 61-amino-acid chain: Large ribosomal subunit protein uL29 (61 aa).

The protein belongs to the universal ribosomal protein uL29 family.

The chain is Large ribosomal subunit protein uL29 from Stenotrophomonas maltophilia (strain K279a).